We begin with the raw amino-acid sequence, 493 residues long: Monocarboxylate transporter 1 (493 aa).

Residues methionine 1–valine 22 are Cytoplasmic-facing. The chain crosses the membrane as a helical span at residues leucine 23–phenylalanine 44. Lysine 38 is a (S)-lactate binding site. The Extracellular segment spans residues lysine 45–threonine 55. A helical membrane pass occupies residues serine 56–valine 80. Over asparagine 81 to glycine 84 the chain is Cytoplasmic. A helical membrane pass occupies residues serine 85–phenylalanine 105. Topologically, residues cysteine 106–valine 109 are extracellular. A helical transmembrane segment spans residues glutamine 110 to leucine 132. The Cytoplasmic segment spans residues threonine 133–alanine 146. The helical transmembrane segment at asparagine 147 to phenylalanine 169 threads the bilayer. Residues aspartate 170–tryptophan 174 are Extracellular-facing. A helical transmembrane segment spans residues arginine 175–leucine 194. The Cytoplasmic segment spans residues methionine 195–arginine 254. Phosphoserine is present on residues serine 210, serine 213, and serine 220. Threonine 224 carries the post-translational modification Phosphothreonine. A Phosphoserine modification is found at serine 230. The chain crosses the membrane as a helical span at residues glycine 255–glycine 281. At lysine 282–serine 288 the chain is on the extracellular side. A helical transmembrane segment spans residues glutamate 289–glycine 310. Aspartate 302 provides a ligand contact to H(+). Arginine 306 contacts (S)-lactate. At leucine 311–arginine 321 the chain is on the cytoplasmic side. A helical transmembrane segment spans residues isoleucine 322 to leucine 342. The Extracellular portion of the chain corresponds to serine 343–tyrosine 346. A helical membrane pass occupies residues valine 347–phenylalanine 368. Over glutamate 369 to serine 382 the chain is Cytoplasmic. Residues alanine 383–glycine 403 form a helical membrane-spanning segment. The Extracellular segment spans residues arginine 404–tyrosine 414. Residues threonine 415–isoleucine 436 form a helical membrane-spanning segment. The Cytoplasmic segment spans residues asparagine 437 to valine 493. The segment covering alanine 447–methionine 472 has biased composition (basic and acidic residues). Residues alanine 447–valine 493 are disordered. A Phosphoserine modification is found at serine 461. Position 462 is a phosphothreonine (threonine 462). Residues alanine 474–aspartate 485 are compositionally biased toward polar residues. A phosphoserine mark is found at serine 477, serine 482, serine 483, and serine 491.

This sequence belongs to the major facilitator superfamily. Monocarboxylate porter (TC 2.A.1.13) family. Interacts with isoform 2 of BSG; interaction mediates SLC16A1 targeting to the plasma membrane. Interacts with EMB; interaction mediates SLC16A1 targeting to the plasma membrane. Detected in liver, brain, spinal cord, spermatozoa, muscle, white adipose tissue and brown adipose tissue (at protein level). Widely expressed, except in pancreas, where expression is not detectable.

Its subcellular location is the cell membrane. The protein resides in the basolateral cell membrane. It localises to the apical cell membrane. The enzyme catalyses (S)-lactate(in) + H(+)(in) = (S)-lactate(out) + H(+)(out). It catalyses the reaction acetate(out) + H(+)(out) = acetate(in) + H(+)(in). It carries out the reaction acetoacetate(out) + H(+)(out) = acetoacetate(in) + H(+)(in). The catalysed reaction is pyruvate(out) + H(+)(out) = pyruvate(in) + H(+)(in). The enzyme catalyses (R)-3-hydroxybutanoate(out) + H(+)(out) = (R)-3-hydroxybutanoate(in) + H(+)(in). It catalyses the reaction 3-methyl-2-oxobutanoate(out) + H(+)(out) = 3-methyl-2-oxobutanoate(in) + H(+)(in). It carries out the reaction 4-methyl-2-oxopentanoate(out) + H(+)(out) = 4-methyl-2-oxopentanoate(in) + H(+)(in). The catalysed reaction is succinate(in) + 2 H(+)(in) = succinate(out) + 2 H(+)(out). In terms of biological role, bidirectional proton-coupled monocarboxylate transporter. Catalyzes the rapid transport across the plasma membrane of many monocarboxylates such as lactate, pyruvate, acetate and the ketone bodies acetoacetate and beta-hydroxybutyrate, and thus contributes to the maintenance of intracellular pH. The transport direction is determined by the proton motive force and the concentration gradient of the substrate monocarboxylate. MCT1 is a major lactate exporter. Plays a role in cellular responses to a high-fat diet by modulating the cellular levels of lactate and pyruvate that contribute to the regulation of central metabolic pathways and insulin secretion, with concomitant effects on plasma insulin levels and blood glucose homeostasis. Facilitates the protonated monocarboxylate form of succinate export, that its transient protonation upon muscle cell acidification in exercising muscle and ischemic heart. Functions via alternate outward- and inward-open conformation states. Protonation and deprotonation of 302-Asp is essential for the conformational transition. In Mus musculus (Mouse), this protein is Monocarboxylate transporter 1 (Slc16a1).